Consider the following 675-residue polypeptide: Putative acyl-coenzyme A oxidase 3.2, peroxisomal (675 aa).

The transit peptide at 1–34 (MSENVELRRAHILANHILRSPRPSSNPSLTPEVC) directs the protein to the peroxisome. 442 to 457 (AVGGQGLKTENRVGHL) serves as a coordination point for FAD.

The protein belongs to the acyl-CoA oxidase family. FAD serves as cofactor.

It localises to the peroxisome. It carries out the reaction a 2,3-saturated acyl-CoA + O2 = a (2E)-enoyl-CoA + H2O2. Its function is as follows. Catalyzes the desaturation of acyl-CoAs to 2-trans-enoyl-CoAs. The polypeptide is Putative acyl-coenzyme A oxidase 3.2, peroxisomal (ACX3.2) (Arabidopsis thaliana (Mouse-ear cress)).